A 296-amino-acid chain; its full sequence is Acetylglutamate kinase (296 aa).

Residues 69-70 (GG), arginine 91, and asparagine 193 each bind substrate.

This sequence belongs to the acetylglutamate kinase family. ArgB subfamily.

It is found in the cytoplasm. It catalyses the reaction N-acetyl-L-glutamate + ATP = N-acetyl-L-glutamyl 5-phosphate + ADP. The protein operates within amino-acid biosynthesis; L-arginine biosynthesis; N(2)-acetyl-L-ornithine from L-glutamate: step 2/4. In terms of biological role, catalyzes the ATP-dependent phosphorylation of N-acetyl-L-glutamate. The protein is Acetylglutamate kinase of Albidiferax ferrireducens (strain ATCC BAA-621 / DSM 15236 / T118) (Rhodoferax ferrireducens).